We begin with the raw amino-acid sequence, 290 residues long: 3-keto-disaccharide hydrolase (290 aa).

The N-terminal stretch at 1 to 19 (MKKVFYPLACCLAAGVLVS) is a signal peptide. The N-palmitoyl cysteine moiety is linked to residue Cys20. A lipid anchor (S-diacylglycerol cysteine) is attached at Cys20.

The protein resides in the cell membrane. It carries out the reaction 3-dehydro-alpha,alpha-trehalose + H2O = 3-dehydro-D-glucose + D-glucose. Its function is as follows. 3-keto-disaccharide hydrolase that preferentially hydrolyzes 3-keto-trehalose (3-dehydro-alpha,alpha-trehalose). Important for disaccharide utilization in the human gut. Also shows hydrolysis activity with the glucosinolates glucoraphanin or glucobrassicin, but with much lower efficiency. The chain is 3-keto-disaccharide hydrolase from Bacteroides thetaiotaomicron (strain ATCC 29148 / DSM 2079 / JCM 5827 / CCUG 10774 / NCTC 10582 / VPI-5482 / E50).